Consider the following 437-residue polypeptide: 26S proteasome subunit RPT4 (437 aa).

The interval 1–51 is disordered; the sequence is MSEEQDPLLAGLGETSGDNHTQQSHEQQPEQPQETEEHHEEEPSRVDPEQE. Residue serine 2 is modified to N-acetylserine. A compositionally biased stretch (low complexity) spans 20 to 32; that stretch reads HTQQSHEQQPEQP. Residues 35–51 are compositionally biased toward basic and acidic residues; that stretch reads TEEHHEEEPSRVDPEQE. 222–229 provides a ligand contact to ATP; the sequence is GPPGTGKT.

It belongs to the AAA ATPase family. In terms of processing, N-acetylated by NAT1.

Its function is as follows. The 26S proteasome is involved in the ATP-dependent degradation of ubiquitinated proteins. The regulatory (or ATPase) complex confers ATP dependency and substrate specificity to the 26S complex. The polypeptide is 26S proteasome subunit RPT4 (RPT4) (Saccharomyces cerevisiae (strain ATCC 204508 / S288c) (Baker's yeast)).